The following is a 201-amino-acid chain: Holliday junction branch migration complex subunit RuvA (201 aa).

Residues 1-64 (MFAFLRGELV…EDAQQLFGFL (64 aa)) form a domain I region. The interval 65-143 (DEEELQLFRL…KIQPAASGKT (79 aa)) is domain II. Residues 144–154 (AGAPQALQLNE) form a flexible linker region. The segment at 154–201 (EDALAALMTLGFPKPAAQKAISGILETSPGLSVEEVVRAALIAIHNNF) is domain III.

The protein belongs to the RuvA family. As to quaternary structure, homotetramer. Forms an RuvA(8)-RuvB(12)-Holliday junction (HJ) complex. HJ DNA is sandwiched between 2 RuvA tetramers; dsDNA enters through RuvA and exits via RuvB. An RuvB hexamer assembles on each DNA strand where it exits the tetramer. Each RuvB hexamer is contacted by two RuvA subunits (via domain III) on 2 adjacent RuvB subunits; this complex drives branch migration. In the full resolvosome a probable DNA-RuvA(4)-RuvB(12)-RuvC(2) complex forms which resolves the HJ.

It is found in the cytoplasm. Its function is as follows. The RuvA-RuvB-RuvC complex processes Holliday junction (HJ) DNA during genetic recombination and DNA repair, while the RuvA-RuvB complex plays an important role in the rescue of blocked DNA replication forks via replication fork reversal (RFR). RuvA specifically binds to HJ cruciform DNA, conferring on it an open structure. The RuvB hexamer acts as an ATP-dependent pump, pulling dsDNA into and through the RuvAB complex. HJ branch migration allows RuvC to scan DNA until it finds its consensus sequence, where it cleaves and resolves the cruciform DNA. This is Holliday junction branch migration complex subunit RuvA from Chlorobaculum tepidum (strain ATCC 49652 / DSM 12025 / NBRC 103806 / TLS) (Chlorobium tepidum).